Consider the following 427-residue polypeptide: Tryptophan synthase beta chain 1 (427 aa).

An N6-(pyridoxal phosphate)lysine modification is found at Lys-107.

Belongs to the TrpB family. In terms of assembly, tetramer of two alpha and two beta chains. Pyridoxal 5'-phosphate is required as a cofactor.

It catalyses the reaction (1S,2R)-1-C-(indol-3-yl)glycerol 3-phosphate + L-serine = D-glyceraldehyde 3-phosphate + L-tryptophan + H2O. The protein operates within amino-acid biosynthesis; L-tryptophan biosynthesis; L-tryptophan from chorismate: step 5/5. Functionally, the beta subunit is responsible for the synthesis of L-tryptophan from indole and L-serine. This Aeropyrum pernix (strain ATCC 700893 / DSM 11879 / JCM 9820 / NBRC 100138 / K1) protein is Tryptophan synthase beta chain 1 (trpB1).